The following is a 173-amino-acid chain: Large ribosomal subunit protein uL16 (173 aa).

This sequence belongs to the universal ribosomal protein uL16 family.

This Methanosphaerula palustris (strain ATCC BAA-1556 / DSM 19958 / E1-9c) protein is Large ribosomal subunit protein uL16.